A 194-amino-acid chain; its full sequence is Probable WRKY transcription factor 51 (194 aa).

Residues Ser-58–Arg-97 are disordered. Positions Ser-76–His-96 are enriched in basic and acidic residues. Residues Ser-104–Leu-169 constitute a DNA-binding region (WRKY).

It belongs to the WRKY group II-c family. As to quaternary structure, interacts with CAMBP25/VQ15.

It localises to the nucleus. Its function is as follows. Transcription factor. Interacts specifically with the W box (5'-(T)TGAC[CT]-3'), a frequently occurring elicitor-responsive cis-acting element. Involved in defense responses. May act as positive regulator of salicylic acid (SA)-mediated signaling and negative regulator of jasmonic acid (JA)-mediated signaling. This Arabidopsis thaliana (Mouse-ear cress) protein is Probable WRKY transcription factor 51 (WRKY51).